The following is a 158-amino-acid chain: Cytochrome c-type biogenesis protein CcmE (158 aa).

The Cytoplasmic portion of the chain corresponds to 1 to 8 (MNIRRRRR). Residues 9 to 29 (LLVVVAILVGLGLATGLVMYA) form a helical; Signal-anchor for type II membrane protein membrane-spanning segment. Topologically, residues 30-158 (LRSNIDLFYT…GLLNVSEPTR (129 aa)) are periplasmic. His-130 and Tyr-134 together coordinate heme.

This sequence belongs to the CcmE/CycJ family.

Its subcellular location is the cell inner membrane. Heme chaperone required for the biogenesis of c-type cytochromes. Transiently binds heme delivered by CcmC and transfers the heme to apo-cytochromes in a process facilitated by CcmF and CcmH. In Tatumella citrea (Pantoea citrea), this protein is Cytochrome c-type biogenesis protein CcmE.